Reading from the N-terminus, the 224-residue chain is C-&gt;U-editing enzyme APOBEC-2 (224 aa).

The disordered stretch occupies residues Met1 to Asn23. Residues Glu60 and His98 each coordinate Zn(2+). The 106-residue stretch at Gly64 to Leu169 folds into the CMP/dCMP-type deaminase domain. Glu100 (proton donor) is an active-site residue. Zn(2+) contacts are provided by Cys128 and Cys131.

The protein belongs to the cytidine and deoxycytidylate deaminase family. In terms of assembly, homotetramer. Zn(2+) serves as cofactor. Expressed exclusively in heart and skeletal muscle.

It carries out the reaction cytidine(6666) in apoB mRNA + H2O + H(+) = uridine(6666) in apoB mRNA + NH4(+). Probable C to U editing enzyme whose physiological substrate is not yet known. Does not display detectable apoB mRNA editing. Has a low intrinsic cytidine deaminase activity. May play a role in the epigenetic regulation of gene expression through the process of active DNA demethylation. This Mus musculus (Mouse) protein is C-&gt;U-editing enzyme APOBEC-2 (Apobec2).